A 178-amino-acid chain; its full sequence is Protein GrpE (178 aa).

The protein belongs to the GrpE family. Homodimer.

Its subcellular location is the cytoplasm. In terms of biological role, participates actively in the response to hyperosmotic and heat shock by preventing the aggregation of stress-denatured proteins, in association with DnaK and GrpE. It is the nucleotide exchange factor for DnaK and may function as a thermosensor. Unfolded proteins bind initially to DnaJ; upon interaction with the DnaJ-bound protein, DnaK hydrolyzes its bound ATP, resulting in the formation of a stable complex. GrpE releases ADP from DnaK; ATP binding to DnaK triggers the release of the substrate protein, thus completing the reaction cycle. Several rounds of ATP-dependent interactions between DnaJ, DnaK and GrpE are required for fully efficient folding. The protein is Protein GrpE of Rickettsia akari (strain Hartford).